The following is a 310-amino-acid chain: TLC domain-containing protein 2 (310 aa).

The next 6 helical transmembrane spans lie at 6 to 26 (LLVAGASFTAFRGLHWGLQLL), 40 to 60 (NIFVSLIHSLLSGVGALVGLW), 79 to 99 (VLVAVSVGYFAADGVDMLWNQ), 117 to 137 (CLSTAVVSGHYVGFSMVSLLL), 167 to 187 (ASLATLVLFRLLPLGWMSLWL), and 194 to 214 (LSLALVLLCVAGLVTVGSISI). Residues 33-227 (RDRWMWRNIF…IRILTKDILQ (195 aa)) form the TLC domain.

Belongs to the TLCD family.

It is found in the cell membrane. Regulates the composition and fluidity of the plasma membrane. Inhibits the incorporation of membrane-fluidizing phospholipids containing omega-3 long-chain polyunsaturated fatty acids (LCPUFA) and thereby promotes membrane rigidity. Does not appear to have any effect on LCPUFA synthesis. The chain is TLC domain-containing protein 2 (Tlcd2) from Mus musculus (Mouse).